The sequence spans 636 residues: Chaperone protein DnaK (636 aa).

Thr-196 carries the post-translational modification Phosphothreonine; by autocatalysis. Residues 591-636 (LAEAMYKSSSQPGAQEAPPTDGQPKPDEKGKDNVVDAEFVDVDDKK) are disordered. A compositionally biased stretch (basic and acidic residues) spans 614–624 (PKPDEKGKDNV).

It belongs to the heat shock protein 70 family.

Its function is as follows. Acts as a chaperone. In Solibacter usitatus (strain Ellin6076), this protein is Chaperone protein DnaK.